The following is a 344-amino-acid chain: Arginine N-succinyltransferase (344 aa).

Leu125 contacts succinyl-CoA. His229 acts as the Proton donor in catalysis.

This sequence belongs to the arginine N-succinyltransferase family.

It catalyses the reaction succinyl-CoA + L-arginine = N(2)-succinyl-L-arginine + CoA + H(+). It participates in amino-acid degradation; L-arginine degradation via AST pathway; L-glutamate and succinate from L-arginine: step 1/5. Catalyzes the transfer of succinyl-CoA to arginine to produce N(2)-succinylarginine. The polypeptide is Arginine N-succinyltransferase (Escherichia coli O17:K52:H18 (strain UMN026 / ExPEC)).